The chain runs to 692 residues: Elongation factor G (692 aa).

In terms of domain architecture, tr-type G spans 9–284 (HKVRNIGIAA…AVVDYLPAPD (276 aa)). GTP is bound by residues 18–25 (AHIDAGKT), 82–86 (DTPGH), and 136–139 (NKMD).

It belongs to the TRAFAC class translation factor GTPase superfamily. Classic translation factor GTPase family. EF-G/EF-2 subfamily.

Its subcellular location is the cytoplasm. In terms of biological role, catalyzes the GTP-dependent ribosomal translocation step during translation elongation. During this step, the ribosome changes from the pre-translocational (PRE) to the post-translocational (POST) state as the newly formed A-site-bound peptidyl-tRNA and P-site-bound deacylated tRNA move to the P and E sites, respectively. Catalyzes the coordinated movement of the two tRNA molecules, the mRNA and conformational changes in the ribosome. The sequence is that of Elongation factor G from Campylobacter concisus (strain 13826).